Reading from the N-terminus, the 554-residue chain is Potassium-transporting ATPase potassium-binding subunit (554 aa).

10 helical membrane passes run Met1–Ala21, Pro60–Leu80, Gly131–Val151, Val174–Ile194, Pro246–Thr266, Gly279–Trp299, Gly375–Gly395, Phe412–Met432, Ile481–Gly501, and Gly525–Leu545.

It belongs to the KdpA family. The system is composed of three essential subunits: KdpA, KdpB and KdpC.

The protein resides in the cell membrane. Functionally, part of the high-affinity ATP-driven potassium transport (or Kdp) system, which catalyzes the hydrolysis of ATP coupled with the electrogenic transport of potassium into the cytoplasm. This subunit binds the extracellular potassium ions and delivers the ions to the membrane domain of KdpB through an intramembrane tunnel. The protein is Potassium-transporting ATPase potassium-binding subunit of Streptomyces avermitilis (strain ATCC 31267 / DSM 46492 / JCM 5070 / NBRC 14893 / NCIMB 12804 / NRRL 8165 / MA-4680).